The primary structure comprises 83 residues: Large ribosomal subunit protein bL27 (83 aa).

The protein belongs to the bacterial ribosomal protein bL27 family.

The polypeptide is Large ribosomal subunit protein bL27 (Thermotoga neapolitana (strain ATCC 49049 / DSM 4359 / NBRC 107923 / NS-E)).